A 131-amino-acid polypeptide reads, in one-letter code: uncharacterized protein (131 aa).

The next 4 membrane-spanning stretches (helical) occupy residues 7 to 29 (LLKF…SLLY), 49 to 69 (LVKV…LIAL), 76 to 98 (LILI…LFTY), and 102 to 124 (ELSE…FLYL).

It localises to the cell membrane. This is an uncharacterized protein from Aquifex aeolicus (strain VF5).